Reading from the N-terminus, the 308-residue chain is Aspartate carbamoyltransferase catalytic subunit (308 aa).

Residues arginine 55 and threonine 56 each coordinate carbamoyl phosphate. Lysine 83 serves as a coordination point for L-aspartate. 3 residues coordinate carbamoyl phosphate: arginine 105, histidine 133, and glutamine 136. Positions 166 and 223 each coordinate L-aspartate. Positions 264 and 265 each coordinate carbamoyl phosphate.

It belongs to the aspartate/ornithine carbamoyltransferase superfamily. ATCase family. As to quaternary structure, heterododecamer (2C3:3R2) of six catalytic PyrB chains organized as two trimers (C3), and six regulatory PyrI chains organized as three dimers (R2).

It catalyses the reaction carbamoyl phosphate + L-aspartate = N-carbamoyl-L-aspartate + phosphate + H(+). It functions in the pathway pyrimidine metabolism; UMP biosynthesis via de novo pathway; (S)-dihydroorotate from bicarbonate: step 2/3. Functionally, catalyzes the condensation of carbamoyl phosphate and aspartate to form carbamoyl aspartate and inorganic phosphate, the committed step in the de novo pyrimidine nucleotide biosynthesis pathway. This Salinispora tropica (strain ATCC BAA-916 / DSM 44818 / JCM 13857 / NBRC 105044 / CNB-440) protein is Aspartate carbamoyltransferase catalytic subunit.